The primary structure comprises 234 residues: Large ribosomal subunit protein uL1 (234 aa).

Belongs to the universal ribosomal protein uL1 family. Part of the 50S ribosomal subunit.

Its function is as follows. Binds directly to 23S rRNA. The L1 stalk is quite mobile in the ribosome, and is involved in E site tRNA release. Functionally, protein L1 is also a translational repressor protein, it controls the translation of the L11 operon by binding to its mRNA. The chain is Large ribosomal subunit protein uL1 from Yersinia pseudotuberculosis serotype O:1b (strain IP 31758).